The primary structure comprises 361 residues: Chorismate synthase (361 aa).

Over residues 40 to 49 (DLQHDLDRRR) the composition is skewed to basic and acidic residues. A disordered region spans residues 40–60 (DLQHDLDRRRPGTSRHTTQRR). The NADP(+) site is built by Arg-48 and Arg-54. Residues 125-127 (RSS), 237-238 (NA), Gly-277, 292-296 (KPTSS), and Arg-318 each bind FMN.

This sequence belongs to the chorismate synthase family. As to quaternary structure, homotetramer. The cofactor is FMNH2.

The catalysed reaction is 5-O-(1-carboxyvinyl)-3-phosphoshikimate = chorismate + phosphate. It participates in metabolic intermediate biosynthesis; chorismate biosynthesis; chorismate from D-erythrose 4-phosphate and phosphoenolpyruvate: step 7/7. Catalyzes the anti-1,4-elimination of the C-3 phosphate and the C-6 proR hydrogen from 5-enolpyruvylshikimate-3-phosphate (EPSP) to yield chorismate, which is the branch point compound that serves as the starting substrate for the three terminal pathways of aromatic amino acid biosynthesis. This reaction introduces a second double bond into the aromatic ring system. This is Chorismate synthase from Chromohalobacter salexigens (strain ATCC BAA-138 / DSM 3043 / CIP 106854 / NCIMB 13768 / 1H11).